Reading from the N-terminus, the 149-residue chain is MHCPFCSAVDTKVIDSRLVGEGSQVRRRRQCLVCHERFTTFEVAELVLPRVIKSNEVREPFNEDKLRSGMLKALEKRPVSSDDVEMAINHIKSHLRATGEREVTTKMVGNLVMEALRKLDKVAYIRFASVYRSFEDIREFGEEIARLQD.

A zinc finger lies at 3–34; that stretch reads CPFCSAVDTKVIDSRLVGEGSQVRRRRQCLVC. One can recognise an ATP-cone domain in the interval 49–139; it reads PRVIKSNEVR…VYRSFEDIRE (91 aa).

The protein belongs to the NrdR family. Zn(2+) serves as cofactor.

Negatively regulates transcription of bacterial ribonucleotide reductase nrd genes and operons by binding to NrdR-boxes. The chain is Transcriptional repressor NrdR from Pectobacterium atrosepticum (strain SCRI 1043 / ATCC BAA-672) (Erwinia carotovora subsp. atroseptica).